The sequence spans 296 residues: NADH-cytochrome b5 reductase 1 (296 aa).

The chain crosses the membrane as a helical span at residues 11 to 31 (LSAVLVKFAPFAVAVIAILAA). The FAD-binding FR-type domain maps to 47–152 (SEFQNFVLKE…RGPKGAMVYT (106 aa)). Residues 132–147 (TTLKIGDTLKVRGPKG) and 158–195 (HIGMIAGGTGITPMLQIIKAIIRNRPRNGGNDTTKIDL) each bind FAD.

The protein belongs to the flavoprotein pyridine nucleotide cytochrome reductase family. As to quaternary structure, monomer. Component of the 2-(3-amino-3-carboxypropyl)histidine synthase complex composed of dph1, dph2, dph3 and a NADH-dependent reductase, predominantly cbr1. It depends on FAD as a cofactor.

It localises to the mitochondrion outer membrane. The enzyme catalyses 2 Fe(III)-[cytochrome b5] + NADH = 2 Fe(II)-[cytochrome b5] + NAD(+) + H(+). It catalyses the reaction 2 Fe(3+)-[Dph3] + NADH = 2 Fe(2+)-[Dph3] + NAD(+) + H(+). Its pathway is protein modification; peptidyl-diphthamide biosynthesis. NADH-dependent reductase for dph3 and cytochrome b5. Required for the first step of diphthamide biosynthesis, a post-translational modification of histidine which occurs in elongation factor 2. Dph1 and dph2 transfer a 3-amino-3-carboxypropyl (ACP) group from S-adenosyl-L-methionine (SAM) to a histidine residue, the reaction is assisted by a reduction system comprising dph3 and a NADH-dependent reductase, predominantly cbr1. By reducing dph3, also involved in the formation of the tRNA wobble base modification mcm5s 2U (5-methoxycarbonylmethyl-2-thiouridine), mediated by the elongator complex. The cytochrome b5/NADH cytochrome b5 reductase electron transfer system supports the catalytic activity of several sterol biosynthetic enzymes. This chain is NADH-cytochrome b5 reductase 1 (cbr1), found in Aspergillus terreus (strain NIH 2624 / FGSC A1156).